Reading from the N-terminus, the 955-residue chain is Beta-agarase B (955 aa).

It belongs to the glycosyl hydrolase 50 family.

It catalyses the reaction Hydrolysis of (1-&gt;4)-beta-D-galactosidic linkages in agarose, giving the tetramer as the predominant product.. Functionally, hydrolyzes agarose to yield predominantly neoagarotetraose and neoagarohexaose. The polypeptide is Beta-agarase B (agaB) (Vibrio sp. (strain JT0107)).